The following is a 281-amino-acid chain: uncharacterized protein (281 aa).

This is an uncharacterized protein from Mycoplasma genitalium (strain ATCC 33530 / DSM 19775 / NCTC 10195 / G37) (Mycoplasmoides genitalium).